Consider the following 434-residue polypeptide: Methylenetetrahydrofolate--tRNA-(uracil-5-)-methyltransferase TrmFO (434 aa).

10–15 (GAGLAG) contacts FAD.

Belongs to the MnmG family. TrmFO subfamily. FAD is required as a cofactor.

Its subcellular location is the cytoplasm. It carries out the reaction uridine(54) in tRNA + (6R)-5,10-methylene-5,6,7,8-tetrahydrofolate + NADH + H(+) = 5-methyluridine(54) in tRNA + (6S)-5,6,7,8-tetrahydrofolate + NAD(+). It catalyses the reaction uridine(54) in tRNA + (6R)-5,10-methylene-5,6,7,8-tetrahydrofolate + NADPH + H(+) = 5-methyluridine(54) in tRNA + (6S)-5,6,7,8-tetrahydrofolate + NADP(+). In terms of biological role, catalyzes the folate-dependent formation of 5-methyl-uridine at position 54 (M-5-U54) in all tRNAs. This chain is Methylenetetrahydrofolate--tRNA-(uracil-5-)-methyltransferase TrmFO, found in Bacillus mycoides (strain KBAB4) (Bacillus weihenstephanensis).